Consider the following 169-residue polypeptide: Peptide deformylase 1 (169 aa).

C93 and H135 together coordinate Fe cation. Residue E136 is part of the active site. Fe cation is bound at residue H139.

It belongs to the polypeptide deformylase family. Fe(2+) serves as cofactor.

The catalysed reaction is N-terminal N-formyl-L-methionyl-[peptide] + H2O = N-terminal L-methionyl-[peptide] + formate. In terms of biological role, removes the formyl group from the N-terminal Met of newly synthesized proteins. Requires at least a dipeptide for an efficient rate of reaction. N-terminal L-methionine is a prerequisite for activity but the enzyme has broad specificity at other positions. This is Peptide deformylase 1 from Corynebacterium glutamicum (strain ATCC 13032 / DSM 20300 / JCM 1318 / BCRC 11384 / CCUG 27702 / LMG 3730 / NBRC 12168 / NCIMB 10025 / NRRL B-2784 / 534).